Consider the following 251-residue polypeptide: Zinc import ATP-binding protein ZnuC (251 aa).

Residues 5 to 220 (VSLENVSVSF…PEFISMFGPR (216 aa)) form the ABC transporter domain. Residue 37 to 44 (GPNGAGKS) coordinates ATP.

Belongs to the ABC transporter superfamily. Zinc importer (TC 3.A.1.15.5) family. As to quaternary structure, the complex is composed of two ATP-binding proteins (ZnuC), two transmembrane proteins (ZnuB) and a solute-binding protein (ZnuA).

It localises to the cell inner membrane. It catalyses the reaction Zn(2+)(out) + ATP(in) + H2O(in) = Zn(2+)(in) + ADP(in) + phosphate(in) + H(+)(in). Functionally, part of the ABC transporter complex ZnuABC involved in zinc import. Responsible for energy coupling to the transport system. This Salmonella choleraesuis (strain SC-B67) protein is Zinc import ATP-binding protein ZnuC.